Reading from the N-terminus, the 162-residue chain is Phenazine biosynthesis protein PhzA2 (162 aa).

Belongs to the PhzA/PhzB family.

The protein operates within antibiotic biosynthesis; phenazine biosynthesis. In terms of biological role, involved in the biosynthesis of the antibiotic phenazine, a nitrogen-containing heterocyclic molecule having important roles in virulence, competition and biological control. PhzA2 (operon phzA2B2C2E2F2G2) has a role in the biosynthesis of the phenazine during both planktonic growth and biofilm development, and in host infection during biofilm development. In Pseudomonas aeruginosa (strain ATCC 15692 / DSM 22644 / CIP 104116 / JCM 14847 / LMG 12228 / 1C / PRS 101 / PAO1), this protein is Phenazine biosynthesis protein PhzA2.